The sequence spans 457 residues: MQKYISEARLLLALAIPVILAQIAQTAMGFVDTVMAGGYSATDMAAVAIGTSIWLPAILFGHGLLLALTPVIAQLNGSGRRERIAHQVRQGFWLAGFVSVLIMLVLWNAGYIIRSMENIDPALADKAVGYLRALLWGAPGYLFFQVARNQCEGLAKTKPGMVMGFIGLLVNIPVNYIFIYGHFGMPELSGVGCGVATAAVYWAMFLAMVSYIKRARSMRDIRNEKGTAKPDPAVMKRLIQLGLPIALALFFEVTLFAVVALLVSPLGIVDVAGHQIALNFSSLMFVLPMSLAAAVTIRVGYRLGQGSTLDAQTAARTGLMVGVCMATLTAIFTVSLREQIALLYNDNPEVVTLAAHLMLLAAVYQISDSIQVIGSGILRGYKDTRSIFYITFTAYWVLGLPSGYILALTDLVVEPMGPAGFWIGFIIGLTSAAIMMMLRMRFLQRLPSAIILQRASR.

Over 1–10 (MQKYISEARL) the chain is Cytoplasmic. A helical membrane pass occupies residues 11 to 31 (LLALAIPVILAQIAQTAMGFV). Residues 32 to 52 (DTVMAGGYSATDMAAVAIGTS) are Periplasmic-facing. A helical transmembrane segment spans residues 53 to 73 (IWLPAILFGHGLLLALTPVIA). Over 74-92 (QLNGSGRRERIAHQVRQGF) the chain is Cytoplasmic. Residues 93–113 (WLAGFVSVLIMLVLWNAGYII) form a helical membrane-spanning segment. At 114–126 (RSMENIDPALADK) the chain is on the periplasmic side. The chain crosses the membrane as a helical span at residues 127 to 147 (AVGYLRALLWGAPGYLFFQVA). The Cytoplasmic portion of the chain corresponds to 148–159 (RNQCEGLAKTKP). Residues 160 to 180 (GMVMGFIGLLVNIPVNYIFIY) traverse the membrane as a helical segment. The Periplasmic portion of the chain corresponds to 181 to 191 (GHFGMPELSGV). Residues 192–212 (GCGVATAAVYWAMFLAMVSYI) traverse the membrane as a helical segment. Topologically, residues 213 to 242 (KRARSMRDIRNEKGTAKPDPAVMKRLIQLG) are cytoplasmic. Residues 243-263 (LPIALALFFEVTLFAVVALLV) traverse the membrane as a helical segment. Topologically, residues 264-275 (SPLGIVDVAGHQ) are periplasmic. The helical transmembrane segment at 276-296 (IALNFSSLMFVLPMSLAAAVT) threads the bilayer. Residues 297 to 313 (IRVGYRLGQGSTLDAQT) lie on the Cytoplasmic side of the membrane. A helical membrane pass occupies residues 314 to 334 (AARTGLMVGVCMATLTAIFTV). Over 335 to 349 (SLREQIALLYNDNPE) the chain is Periplasmic. The helical transmembrane segment at 350–370 (VVTLAAHLMLLAAVYQISDSI) threads the bilayer. Over 371-386 (QVIGSGILRGYKDTRS) the chain is Cytoplasmic. A helical membrane pass occupies residues 387–407 (IFYITFTAYWVLGLPSGYILA). The Periplasmic portion of the chain corresponds to 408-417 (LTDLVVEPMG). The helical transmembrane segment at 418–438 (PAGFWIGFIIGLTSAAIMMML) threads the bilayer. The Cytoplasmic segment spans residues 439–457 (RMRFLQRLPSAIILQRASR).

It belongs to the multi antimicrobial extrusion (MATE) (TC 2.A.66.1) family. MdtK subfamily.

Its subcellular location is the cell inner membrane. In terms of biological role, multidrug efflux pump that functions probably as a Na(+)/drug antiporter. This is Multidrug resistance protein MdtK from Shigella dysenteriae serotype 1 (strain Sd197).